The chain runs to 292 residues: Homoserine kinase (292 aa).

Residue 84 to 94 (PISRGLGSSSA) coordinates ATP.

Belongs to the GHMP kinase family. Homoserine kinase subfamily.

The protein localises to the cytoplasm. The catalysed reaction is L-homoserine + ATP = O-phospho-L-homoserine + ADP + H(+). The protein operates within amino-acid biosynthesis; L-threonine biosynthesis; L-threonine from L-aspartate: step 4/5. Functionally, catalyzes the ATP-dependent phosphorylation of L-homoserine to L-homoserine phosphate. The protein is Homoserine kinase of Sulfurovum sp. (strain NBC37-1).